Here is a 268-residue protein sequence, read N- to C-terminus: Taurine import ATP-binding protein TauB (268 aa).

The 233-residue stretch at 4-236 folds into the ABC transporter domain; that stretch reads LAIRNISMRF…EGVDADLREV (233 aa). ATP is bound at residue 41–48; sequence GPSGCGKT.

The protein belongs to the ABC transporter superfamily. Taurine importer (TC 3.A.1.17.1) family. In terms of assembly, the complex is composed of two ATP-binding proteins (TauB), two transmembrane proteins (TauC) and a solute-binding protein (TauA).

The protein localises to the cell inner membrane. The enzyme catalyses taurine(out) + ATP + H2O = taurine(in) + ADP + phosphate + H(+). Functionally, part of the ABC transporter complex TauABC involved in taurine import. Responsible for energy coupling to the transport system. The sequence is that of Taurine import ATP-binding protein TauB from Jannaschia sp. (strain CCS1).